Reading from the N-terminus, the 206-residue chain is Large ribosomal subunit protein uL4 (206 aa).

This sequence belongs to the universal ribosomal protein uL4 family. Part of the 50S ribosomal subunit.

One of the primary rRNA binding proteins, this protein initially binds near the 5'-end of the 23S rRNA. It is important during the early stages of 50S assembly. It makes multiple contacts with different domains of the 23S rRNA in the assembled 50S subunit and ribosome. Functionally, forms part of the polypeptide exit tunnel. In Rhodopseudomonas palustris (strain HaA2), this protein is Large ribosomal subunit protein uL4.